Consider the following 537-residue polypeptide: CTP synthase (537 aa).

The segment at 1 to 265 (MVHFIFVTGG…DNKVLKFFNI (265 aa)) is amidoligase domain. Residue Ser13 participates in CTP binding. UTP is bound at residue Ser13. ATP is bound by residues 14-19 (SLGKGL) and Asp71. Asp71 and Glu139 together coordinate Mg(2+). CTP is bound by residues 146 to 148 (DIE) and Lys222. Residue Lys222 participates in UTP binding. Positions 290–536 (RIAIIAKYHK…IKAAIEYNKC (247 aa)) constitute a Glutamine amidotransferase type-1 domain. Gly352 lines the L-glutamine pocket. Cys379 acts as the Nucleophile; for glutamine hydrolysis in catalysis. L-glutamine-binding positions include 380 to 383 (FGMQ), Glu403, and Arg464. Active-site residues include His509 and Glu511.

This sequence belongs to the CTP synthase family. As to quaternary structure, homotetramer.

It carries out the reaction UTP + L-glutamine + ATP + H2O = CTP + L-glutamate + ADP + phosphate + 2 H(+). The enzyme catalyses L-glutamine + H2O = L-glutamate + NH4(+). It catalyses the reaction UTP + NH4(+) + ATP = CTP + ADP + phosphate + 2 H(+). Its pathway is pyrimidine metabolism; CTP biosynthesis via de novo pathway; CTP from UDP: step 2/2. Allosterically activated by GTP, when glutamine is the substrate; GTP has no effect on the reaction when ammonia is the substrate. The allosteric effector GTP functions by stabilizing the protein conformation that binds the tetrahedral intermediate(s) formed during glutamine hydrolysis. Inhibited by the product CTP, via allosteric rather than competitive inhibition. Its function is as follows. Catalyzes the ATP-dependent amination of UTP to CTP with either L-glutamine or ammonia as the source of nitrogen. Regulates intracellular CTP levels through interactions with the four ribonucleotide triphosphates. This is CTP synthase from Rickettsia peacockii (strain Rustic).